Consider the following 359-residue polypeptide: UDP-N-acetylglucosamine--N-acetylmuramyl-(pentapeptide) pyrophosphoryl-undecaprenol N-acetylglucosamine transferase (359 aa).

UDP-N-acetyl-alpha-D-glucosamine is bound by residues 15–17, asparagine 127, arginine 166, serine 191, isoleucine 245, 264–269, and glutamine 290; these read TGG and ALTVSE.

It belongs to the glycosyltransferase 28 family. MurG subfamily.

It is found in the cell inner membrane. The catalysed reaction is di-trans,octa-cis-undecaprenyl diphospho-N-acetyl-alpha-D-muramoyl-L-alanyl-D-glutamyl-meso-2,6-diaminopimeloyl-D-alanyl-D-alanine + UDP-N-acetyl-alpha-D-glucosamine = di-trans,octa-cis-undecaprenyl diphospho-[N-acetyl-alpha-D-glucosaminyl-(1-&gt;4)]-N-acetyl-alpha-D-muramoyl-L-alanyl-D-glutamyl-meso-2,6-diaminopimeloyl-D-alanyl-D-alanine + UDP + H(+). The protein operates within cell wall biogenesis; peptidoglycan biosynthesis. Its function is as follows. Cell wall formation. Catalyzes the transfer of a GlcNAc subunit on undecaprenyl-pyrophosphoryl-MurNAc-pentapeptide (lipid intermediate I) to form undecaprenyl-pyrophosphoryl-MurNAc-(pentapeptide)GlcNAc (lipid intermediate II). This is UDP-N-acetylglucosamine--N-acetylmuramyl-(pentapeptide) pyrophosphoryl-undecaprenol N-acetylglucosamine transferase from Pseudomonas putida (strain ATCC 700007 / DSM 6899 / JCM 31910 / BCRC 17059 / LMG 24140 / F1).